The sequence spans 85 residues: Large ribosomal subunit protein bL27 (85 aa).

A disordered region spans residues 1 to 20 (MATKKAGGSTRNGRDSEAKR).

The protein belongs to the bacterial ribosomal protein bL27 family.

The chain is Large ribosomal subunit protein bL27 from Histophilus somni (strain 129Pt) (Haemophilus somnus).